Reading from the N-terminus, the 76-residue chain is DNA-binding protein S1FA2 (76 aa).

Positions 50–55 (PPRKKK) match the Nuclear localization signal motif. Residues 51-66 (PRKKKPLSKKKLKREK) show a composition bias toward basic residues. Residues 51–76 (PRKKKPLSKKKLKREKLKQGVPVPGE) form a disordered region.

Belongs to the S1FA transcription factor family.

It localises to the nucleus. DNA-binding protein that specifically recognizes a negative element (S1F) within the RPS1 promoter. In Arabidopsis thaliana (Mouse-ear cress), this protein is DNA-binding protein S1FA2 (S1FA2).